The sequence spans 388 residues: Mannitol-1-phosphate 5-dehydrogenase (388 aa).

Position 5 to 16 (5 to 16) interacts with NAD(+); it reads AVHFGGGNIGRG. The active site involves lysine 213.

It belongs to the mannitol dehydrogenase family. In terms of assembly, monomer.

The catalysed reaction is D-mannitol 1-phosphate + NAD(+) = beta-D-fructose 6-phosphate + NADH + H(+). Catalyzes the NAD(H)-dependent interconversion of D-fructose 6-phosphate and D-mannitol 1-phosphate in the mannitol metabolic pathway. This chain is Mannitol-1-phosphate 5-dehydrogenase, found in Coccidioides immitis (strain RS) (Valley fever fungus).